We begin with the raw amino-acid sequence, 46 residues long: Protein PsbN (46 aa).

Residues 10–30 (IAITILIVLLGLTAFGVYTAF) traverse the membrane as a helical segment.

Belongs to the PsbN family.

The protein resides in the cellular thylakoid membrane. May play a role in photosystem I and II biogenesis. This is Protein PsbN from Prochlorococcus marinus (strain SARG / CCMP1375 / SS120).